A 165-amino-acid chain; its full sequence is Large ribosomal subunit protein uL30 (165 aa).

Belongs to the universal ribosomal protein uL30 family. In terms of assembly, part of the 50S ribosomal subunit.

The polypeptide is Large ribosomal subunit protein uL30 (Thermoplasma acidophilum (strain ATCC 25905 / DSM 1728 / JCM 9062 / NBRC 15155 / AMRC-C165)).